The sequence spans 315 residues: Secreted frizzled-related protein 5 (315 aa).

Positions 1 to 27 (MRAAAGGARAAVLALLLGALHGAPARG) are cleaved as a signal peptide. Residues 46–163 (SKPPQCLDIP…PLDNDLCIAV (118 aa)) form the FZ domain. 8 disulfide bridges follow: Cys51–Cys114, Cys61–Cys107, Cys98–Cys133, Cys122–Cys160, Cys126–Cys150, Cys179–Cys251, Cys182–Cys253, and Cys196–Cys301. The NTR domain maps to 179-301 (CAQCEMEHSA…AVKFMFSYPC (123 aa)).

Belongs to the secreted frizzled-related protein (sFRP) family. Strongly expressed in the retinal pigment epithelium (RPE). Weak expression in retina, brain, heart, liver, kidney, testis and muscle.

It is found in the secreted. In terms of biological role, soluble frizzled-related proteins (sFRPS) function as modulators of Wnt signaling through direct interaction with Wnts. They have a role in regulating cell growth and differentiation in specific cell types. SFRP5 may be involved in determining the polarity of photoreceptor, and perhaps other, cells in the retina. Inhibits Wnt8 signaling, in vitro. The protein is Secreted frizzled-related protein 5 (SFRP5) of Bos taurus (Bovine).